We begin with the raw amino-acid sequence, 153 residues long: Superoxide dismutase [Cu-Zn] (153 aa).

The Cu cation site is built by His-45, His-47, and His-62. Cysteines 56 and 145 form a disulfide. 4 residues coordinate Zn(2+): His-62, His-70, His-79, and Asp-82. His-119 contacts Cu cation.

Belongs to the Cu-Zn superoxide dismutase family. As to quaternary structure, homodimer. It depends on Cu cation as a cofactor. Requires Zn(2+) as cofactor.

It is found in the cytoplasm. It carries out the reaction 2 superoxide + 2 H(+) = H2O2 + O2. Destroys radicals which are normally produced within the cells and which are toxic to biological systems. This chain is Superoxide dismutase [Cu-Zn], found in Drosophila yakuba (Fruit fly).